The chain runs to 508 residues: Photosystem II CP47 reaction center protein (508 aa).

Transmembrane regions (helical) follow at residues 21-36, 101-115, 140-156, 203-218, 237-252, and 457-472; these read SVHLMHTALVSGWAGS, IVLSGLLFLASIWHW, GIHLFLSGLLCFGFGAF, IAAGILGILAGLFHLT, VLSSSIAAVFWAAFVV, and CFALLFFFGHIWHGAR.

This sequence belongs to the PsbB/PsbC family. PsbB subfamily. PSII is composed of 1 copy each of membrane proteins PsbA, PsbB, PsbC, PsbD, PsbE, PsbF, PsbH, PsbI, PsbJ, PsbK, PsbL, PsbM, PsbT, PsbX, PsbY, PsbZ, Psb30/Ycf12, at least 3 peripheral proteins of the oxygen-evolving complex and a large number of cofactors. It forms dimeric complexes. Binds multiple chlorophylls. PSII binds additional chlorophylls, carotenoids and specific lipids. is required as a cofactor.

The protein resides in the plastid. It localises to the chloroplast thylakoid membrane. In terms of biological role, one of the components of the core complex of photosystem II (PSII). It binds chlorophyll and helps catalyze the primary light-induced photochemical processes of PSII. PSII is a light-driven water:plastoquinone oxidoreductase, using light energy to abstract electrons from H(2)O, generating O(2) and a proton gradient subsequently used for ATP formation. The polypeptide is Photosystem II CP47 reaction center protein (Chlorokybus atmophyticus (Soil alga)).